The following is a 110-amino-acid chain: Ig kappa chain V region 2717 (110 aa).

The segment at 1-23 (VEVLTQTPSPVSAAVGGTVTISC) is framework-1. Residues 24–36 (QSTKSIYBBBYLA) form a complementarity-determining-1 region. The framework-2 stretch occupies residues 37–51 (WYQZKPGQPPKALIY). The interval 52-58 (TASSLAS) is complementarity-determining-2. The tract at residues 59–90 (GVPSRFTGSGSGTZFTLTLSDVZCDDAATYYC) is framework-3. The interval 91-99 (GGADYTGYS) is complementarity-determining-3. The segment at 100–109 (FGGGTEVVVK) is framework-4.

In Oryctolagus cuniculus (Rabbit), this protein is Ig kappa chain V region 2717.